The following is a 184-amino-acid chain: Guanylate kinase (184 aa).

The Guanylate kinase-like domain maps to 4-182 (MGLTVLSGPS…AAARLVALMI (179 aa)). Residue 11-18 (GPSGVGKD) participates in ATP binding.

This sequence belongs to the guanylate kinase family.

The protein resides in the cytoplasm. The enzyme catalyses GMP + ATP = GDP + ADP. In terms of biological role, essential for recycling GMP and indirectly, cGMP. The polypeptide is Guanylate kinase (Frankia casuarinae (strain DSM 45818 / CECT 9043 / HFP020203 / CcI3)).